The chain runs to 446 residues: ATP-dependent protease ATPase subunit HslU (446 aa).

ATP is bound by residues Ile18, 60–65, Asp259, Glu324, and Arg396; that span reads GVGKTE.

This sequence belongs to the ClpX chaperone family. HslU subfamily. A double ring-shaped homohexamer of HslV is capped on each side by a ring-shaped HslU homohexamer. The assembly of the HslU/HslV complex is dependent on binding of ATP.

It is found in the cytoplasm. ATPase subunit of a proteasome-like degradation complex; this subunit has chaperone activity. The binding of ATP and its subsequent hydrolysis by HslU are essential for unfolding of protein substrates subsequently hydrolyzed by HslV. HslU recognizes the N-terminal part of its protein substrates and unfolds these before they are guided to HslV for hydrolysis. This Vibrio atlanticus (strain LGP32) (Vibrio splendidus (strain Mel32)) protein is ATP-dependent protease ATPase subunit HslU.